The chain runs to 598 residues: Thiamine transporter (598 aa).

At Met1–Thr41 the chain is on the cytoplasmic side. The helical transmembrane segment at Trp42–Met62 threads the bilayer. Over Ser63–Ser73 the chain is Extracellular. A helical membrane pass occupies residues Tyr74 to Ala94. The Cytoplasmic portion of the chain corresponds to Asn95 to Arg111. Residues Phe112–Val132 form a helical membrane-spanning segment. The Extracellular portion of the chain corresponds to Asn133 to Glu173. A helical membrane pass occupies residues Leu174–His194. The Cytoplasmic segment spans residues Met195–Tyr197. The helical transmembrane segment at Ile198–Ala218 threads the bilayer. Topologically, residues Lys219–Lys240 are extracellular. Residues Ala241–Asn261 traverse the membrane as a helical segment. Residues Gln262–Ala274 lie on the Cytoplasmic side of the membrane. The chain crosses the membrane as a helical span at residues Ile275–Val295. The Extracellular portion of the chain corresponds to Ile296–Ala332. The helical transmembrane segment at Phe333–Phe353 threads the bilayer. At Ala354–Arg371 the chain is on the cytoplasmic side. The helical transmembrane segment at Gly372–Ser392 threads the bilayer. Over Ser393 to Thr394 the chain is Extracellular. A helical transmembrane segment spans residues Phe395 to Cys415. Residues Asp416–Arg446 are Cytoplasmic-facing. A helical membrane pass occupies residues Ala447–Asn467. Topologically, residues Asn468–Asp483 are extracellular. The chain crosses the membrane as a helical span at residues Ser484 to Phe504. Topologically, residues Lys505–Ala598 are cytoplasmic. Position 560 is a phosphoserine (Ser560). Positions Asn574–Ala598 are disordered. Residues Lys588–Ala598 are compositionally biased toward polar residues.

It belongs to the purine-cytosine permease (2.A.39) family.

The protein localises to the membrane. In terms of biological role, responsible for intake of thiamine. The polypeptide is Thiamine transporter (THI7) (Saccharomyces cerevisiae (strain ATCC 204508 / S288c) (Baker's yeast)).